Reading from the N-terminus, the 393-residue chain is Lipid-A-disaccharide synthase (393 aa).

It belongs to the LpxB family.

It carries out the reaction a lipid X + a UDP-2-N,3-O-bis[(3R)-3-hydroxyacyl]-alpha-D-glucosamine = a lipid A disaccharide + UDP + H(+). Its pathway is bacterial outer membrane biogenesis; LPS lipid A biosynthesis. Its function is as follows. Condensation of UDP-2,3-diacylglucosamine and 2,3-diacylglucosamine-1-phosphate to form lipid A disaccharide, a precursor of lipid A, a phosphorylated glycolipid that anchors the lipopolysaccharide to the outer membrane of the cell. The protein is Lipid-A-disaccharide synthase of Bordetella petrii (strain ATCC BAA-461 / DSM 12804 / CCUG 43448).